A 727-amino-acid chain; its full sequence is Glucans biosynthesis glucosyltransferase H (727 aa).

The disordered stretch occupies residues Ser-18 to Arg-43. Transmembrane regions (helical) follow at residues Phe-58–Val-78, Leu-94–Phe-114, Leu-278–Val-298, Ile-408–Ala-428, Leu-460–Leu-480, Ile-496–Ile-516, and Leu-572–Trp-592.

Belongs to the glycosyltransferase 2 family. OpgH subfamily.

It is found in the cell inner membrane. It participates in glycan metabolism; osmoregulated periplasmic glucan (OPG) biosynthesis. Involved in the biosynthesis of osmoregulated periplasmic glucans (OPGs). The sequence is that of Glucans biosynthesis glucosyltransferase H from Shewanella sp. (strain ANA-3).